The sequence spans 354 residues: Guanine nucleotide-binding protein G(o) subunit alpha (354 aa).

Gly2 carries N-myristoyl glycine lipidation. Residue Cys3 is the site of S-palmitoyl cysteine attachment. A G-alpha domain is found at 32–354 (KDVKLLLLGA…ANNLRGCGLY (323 aa)). A G1 motif region spans residues 35 to 48 (KLLLLGAGESGKST). Residues Glu43, Lys46, Ser47, Thr48, Ser152, Leu176, Arg177, Thr178, and Arg179 each coordinate GTP. Ser47 contributes to the Mg(2+) binding site. The tract at residues 174 to 182 (DILRTRVKT) is G2 motif. Arg179 is modified (ADP-ribosylarginine; by cholera toxin). Thr182 serves as a coordination point for Mg(2+). The interval 197-206 (FRLFDVGGQR) is G3 motif. Position 205 is a 5-glutamyl histamine (Gln205). The tract at residues 266 to 273 (ILFLNKKD) is G4 motif. 3 residues coordinate GTP: Asn270, Asp273, and Cys325. The G5 motif stretch occupies residues 324–329 (TCATDT). Cys351 carries S-palmitoyl cysteine lipidation. Residue Cys351 is modified to ADP-ribosylcysteine; by pertussis toxin.

The protein belongs to the G-alpha family. G(i/o/t/z) subfamily. As to quaternary structure, g proteins are composed of 3 units; alpha, beta and gamma. The alpha chain contains the guanine nucleotide binding site. Forms a complex with GNB1 and GNG3. Interacts with RGS14. Interacts with RGS16. Interacts with RGS19. Interacts (when palmitoylated) with ADGRG3. Post-translationally, histaminylated at Gln-205 residues by TGM2. Palmitoylated at Cys-351, leading to binding to ADGRG3.

It is found in the cell membrane. The protein localises to the membrane. It carries out the reaction GTP + H2O = GDP + phosphate + H(+). With respect to regulation, the GTPase activity is promoted by GTPAse activators, such as RGS14, RGS16 and RGS19. Its function is as follows. Guanine nucleotide-binding proteins (G proteins) function as transducers downstream of G protein-coupled receptors (GPCRs) in numerous signaling cascades. The alpha chain contains the guanine nucleotide binding site and alternates between an active, GTP-bound state and an inactive, GDP-bound state. Signaling by an activated GPCR promotes GDP release and GTP binding. The alpha subunit has a low GTPase activity that converts bound GTP to GDP, thereby terminating the signal. Both GDP release and GTP hydrolysis are modulated by numerous regulatory proteins. Signaling is mediated via effector proteins, such as adenylate cyclase. Inhibits adenylate cyclase activity, leading to decreased intracellular cAMP levels. This is Guanine nucleotide-binding protein G(o) subunit alpha (GNAO1) from Homo sapiens (Human).